The primary structure comprises 117 residues: G antigen 12B/C/D/E (117 aa).

Residues 1-117 (MSWRGRSTYY…PEEGEKQSQC (117 aa)) form a disordered region. 2 stretches are compositionally biased toward acidic residues: residues 32–45 (FSDE…EEGE) and 87–96 (ECEDGPDGQE). Residues 103-117 (EEVKTPEEGEKQSQC) show a composition bias toward basic and acidic residues.

The protein belongs to the GAGE family.

The sequence is that of G antigen 12B/C/D/E (GAGE12B) from Homo sapiens (Human).